Consider the following 452-residue polypeptide: MIIKALAIVSLCLASIQASKVGAPQLPKKHLVCYYDSASFVKEGLGKLVIDELEPALQFCDYLVYGYAGIERDSHKAVSLNQQLDLDLGKGLYRTVTRLKRKYPNVKILLSVGGDKDIELDKDAKELPNKYLELLESPTGRTRFVNTVYSLVKTYGFDGLDVAWQFPKNKPKKVHSGIGSLWKGFKKVFSGDSIVDEKSEEHKEQFTALLRDVKNAFRPDNLLLSTTVLPNVNSSLFYDIPAVVNYLDFVNLGTFDFFTPQRNPEVADYAAPIYELSERNPEFNVAAQVKYWLRNNCPASKINVGVATYGRPWKLTDDSGDTGVPPVKDVKDEAPVGGNTQVPGIYSWPEVCALLPNQNNAYLKGANAPLIKVQDPAKRFGSYAYRAADKKGDNGIWVSFEDPDTAADKAGYVRTENLGGVALFDLSYDDFRGLCTNEKYPILRAIKYRLTN.

The signal sequence occupies residues 1–18 (MIIKALAIVSLCLASIQA). One can recognise a GH18 domain in the interval 29-452 (KHLVCYYDSA…LRAIKYRLTN (424 aa)). Cysteines 33 and 60 form a disulfide. N-linked (GlcNAc...) asparagine glycosylation is present at N233. C352 and C435 are joined by a disulfide.

Belongs to the glycosyl hydrolase 18 family. IDGF subfamily. Glycosylated. As to expression, in larvae, it is expressed in the fat body and by hemocytes.

The protein localises to the secreted. Probably required to stimulate the proliferation, polarization and motility of imaginal disk cells. May act by stabilizing the binding of insulin-like peptides to its receptor through a simultaneous interaction with both molecules to form a multiprotein signaling complex. The polypeptide is Imaginal disk growth factor 6 (Drosophila melanogaster (Fruit fly)).